The chain runs to 435 residues: NADH-quinone oxidoreductase subunit D (435 aa).

This sequence belongs to the complex I 49 kDa subunit family. In terms of assembly, NDH-1 is composed of 14 different subunits. Subunits NuoB, C, D, E, F, and G constitute the peripheral sector of the complex.

The protein localises to the cell inner membrane. The catalysed reaction is a quinone + NADH + 5 H(+)(in) = a quinol + NAD(+) + 4 H(+)(out). NDH-1 shuttles electrons from NADH, via FMN and iron-sulfur (Fe-S) centers, to quinones in the respiratory chain. The immediate electron acceptor for the enzyme in this species is believed to be ubiquinone. Couples the redox reaction to proton translocation (for every two electrons transferred, four hydrogen ions are translocated across the cytoplasmic membrane), and thus conserves the redox energy in a proton gradient. This chain is NADH-quinone oxidoreductase subunit D, found in Xanthomonas axonopodis pv. citri (strain 306).